The primary structure comprises 477 residues: Putative WAS protein family homolog 4 (477 aa).

The interval 1 to 180 (MSGVMCLKAS…EGLGGLPSNI (180 aa)) is WHD1. Disordered stretches follow at residues 310 to 420 (QDGV…QGGH) and 434 to 477 (KGIS…DWES). Pro residues predominate over residues 315–327 (TPPPPPPPPPPAP). Residues 362-477 (QGAPREVVDP…QAEDEDDWES (116 aa)) form a VCA region. A WH2 domain is found at 374–396 (GWATLLESIRQAGGIGKAKLRSM). A compositionally biased stretch (basic and acidic residues) spans 395-411 (SMKERKLEKQQQKEQEQ). Gly residues predominate over residues 437–449 (SGKGPGAGDGPGG).

The protein belongs to the WASH1 family. As to quaternary structure, interacts (via WHD1 region) with WASHC2C; the interaction is direct.

The protein resides in the early endosome membrane. It localises to the recycling endosome membrane. Its function is as follows. May act as a nucleation-promoting factor at the surface of endosomes, where it recruits and activates the Arp2/3 complex to induce actin polymerization, playing a key role in the fission of tubules that serve as transport intermediates during endosome sorting. The chain is Putative WAS protein family homolog 4 (WASH4P) from Homo sapiens (Human).